Reading from the N-terminus, the 514-residue chain is Protein translocase subunit SecD (514 aa).

5 helical membrane passes run 7 to 27, 357 to 377, 389 to 409, 448 to 470, and 482 to 502; these read WKIF…LPNF, IIGF…LGLF, VLAL…AGII, FATI…IFGV, and IGII…IDIW.

The protein belongs to the SecD/SecF family. SecD subfamily. Forms a complex with SecF. Part of the essential Sec protein translocation apparatus which comprises SecA, SecYEG and auxiliary proteins SecDF-YajC and YidC.

The protein resides in the cell inner membrane. Functionally, part of the Sec protein translocase complex. Interacts with the SecYEG preprotein conducting channel. SecDF uses the proton motive force (PMF) to complete protein translocation after the ATP-dependent function of SecA. This is Protein translocase subunit SecD from Rickettsia bellii (strain RML369-C).